We begin with the raw amino-acid sequence, 187 residues long: Large ribosomal subunit protein uL22 (187 aa).

Belongs to the universal ribosomal protein uL22 family.

The chain is Large ribosomal subunit protein uL22 (RPL17) from Theileria annulata.